The primary structure comprises 446 residues: Citrate/sodium symporter (446 aa).

The Cytoplasmic portion of the chain corresponds to 1-27 (MTNMSQPPATEKKGVSDLLGFKIFGMP). Residues 28 to 44 (LPLYAFALITLLLSHFY) form a helical membrane-spanning segment. At 45–50 (NALPTD) the chain is on the periplasmic side. Residues 51-71 (IVGGFAIMFIIGAIFGEIGKR) form a helical membrane-spanning segment. Over 72-80 (LPIFNKYIG) the chain is Cytoplasmic. The chain crosses the membrane as a helical span at residues 81–95 (GAPVMIFLVAAYFVY). Topologically, residues 96 to 115 (AGIFTQKEIDAISNVMDKSN) are periplasmic. The chain crosses the membrane as a helical span at residues 116-130 (FLNLFIAVLITGAIL). The Cytoplasmic segment spans residues 131–136 (SVNRRL). The chain crosses the membrane as a helical span at residues 137–166 (LLKSLLGYIPTILMGIVGASIFGIAIGLVF). Residues 167-181 (GIPVDRIMMLYVLPI) lie on the Periplasmic side of the membrane. Positions 181 and 183 each coordinate Na(+). Positions 182–189 (MGGGNGAG) form an intramembrane region, helical. 2 residues coordinate citrate: asparagine 186 and glycine 187. Topologically, residues 190 to 212 (AVPLSEIYHSVTGRSREEYYSTA) are periplasmic. The chain crosses the membrane as a helical span at residues 213–233 (IAILTIANIFAIVFAAVLDII). Residues 234–264 (GKKHTWLSGEGELVRKASFKVEEDEKTGQIT) lie on the Cytoplasmic side of the membrane. A helical transmembrane segment spans residues 265 to 287 (HRETAVGLVLSTTCFLLAYVVAK). At 288-299 (KILPSIGGVAIH) the chain is on the periplasmic side. Residues 300 to 315 (YFAWMVLIVAALNASG) traverse the membrane as a helical segment. The Cytoplasmic segment spans residues 316 to 327 (LCSPEIKAGAKR). The chain crosses the membrane as a helical span at residues 328–351 (LSDFFSKQLLWVLMVGVGVCYTDL). Topologically, residues 352–359 (QEIINAIT) are periplasmic. Residues 360-381 (FANVVIAAIIVIGAVLGAAIGG) form a helical membrane-spanning segment. The Cytoplasmic portion of the chain corresponds to 382 to 398 (WLMGFFPIESAITAGLC). 2 residues coordinate Na(+): methionine 399 and asparagine 401. Residues 399 to 406 (MANRGGSG) constitute an intramembrane region (helical). Arginine 402, glycine 404, and serine 405 together coordinate citrate. Residues 407-416 (DLEVLSACNR) are Cytoplasmic-facing. Residues 417–438 (MNLISYAQISSRLGGGIVLVIA) traverse the membrane as a helical segment. A citrate-binding site is contributed by arginine 428. At 439-446 (SIVFGMMI) the chain is on the periplasmic side.

It belongs to the 2-hydroxycarboxylate transporter (2-HCT) (TC 2.A.24) family. As to quaternary structure, homodimer.

It localises to the cell inner membrane. The enzyme catalyses citrate(out) + 2 Na(+)(out) = citrate(in) + 2 Na(+)(in). With respect to regulation, in the absence of Na(+), transport is inhibited by the thiol reagents N-ethylmaleimide (NEM) and the methanethiosulfonate (MTS) derivatives MTSEA, MTSET and MTSES. However, inactivation by NEM, MTSES and MTSET is prevented by the presence of Na(+). In the absence of Na(+), the substrate citrate has no effect on the inactivation by permeable or impermeable thiol reagents. In contrast, when subsaturating concentrations of Na(+) are present, citrate significantly reduces inactivation, suggesting ordered binding of the substrate and co-ion; citrate is bound after Na(+). The membrane impermeable bulky maleimide AmdiS does not inactivate the transporter in right-side-out membrane vesicles. The apparent affinity for Na(+) decreases with increasing proton concentration. Protons cannot replace Na(+) in the translocation step but the decrease in apparent affinity for Na(+) towards lower pH suggests that protons can compete with Na(+) for the cation-binding sites. Its function is as follows. Secondary active transporter that catalyzes the uptake of citrate across the membrane with the concomitant uptake of sodium. There are conflicting data regarding exact substrate stoichiometry: the sodium/citrate stoichiometry was predicted to be 1, but the latest studies suggest that CitS transports citrate in symport with 2 sodium ions. Transports citrate as a divalent citrate anion, H-citrate(2-). Shows narrow substrate specificity and is very specific, transporting only citrate and to a low extent citromalate. Symport of Na(+) is absolutely required in the range pH 5-7 because no uptake can be detected in the absence of Na(+). Lithium can replace Na(+) in the symport reaction but it takes about a 200-fold higher concentration of Li(+) over Na(+) to achieve the same rate of uptake. In Klebsiella pneumoniae, this protein is Citrate/sodium symporter.